A 93-amino-acid polypeptide reads, in one-letter code: Mitochondrial import inner membrane translocase subunit tim10 (93 aa).

The short motif at 38 to 63 (CQKKCIPNDYREGDLNKGESVCLDRC) is the Twin CX3C motif element. Cystine bridges form between Cys-38-Cys-63 and Cys-42-Cys-59.

This sequence belongs to the small Tim family. In terms of assembly, heterohexamer; composed of 3 copies of TIM9 and 3 copies of TIM10, named soluble 70 kDa complex. Associates directly with the TIM22 complex, whose core is composed of TIM22 and TIM54. Interacts with the transmembrane regions of multi-pass transmembrane proteins in transit.

The protein localises to the mitochondrion inner membrane. In terms of biological role, mitochondrial intermembrane chaperone that participates in the import and insertion of multi-pass transmembrane proteins into the mitochondrial inner membrane. Also required for the transfer of beta-barrel precursors from the TOM complex to the sorting and assembly machinery (SAM complex) of the outer membrane. Acts as a chaperone-like protein that protects the hydrophobic precursors from aggregation and guide them through the mitochondrial intermembrane space. The chain is Mitochondrial import inner membrane translocase subunit tim10 (tim10) from Aspergillus fumigatus (strain ATCC MYA-4609 / CBS 101355 / FGSC A1100 / Af293) (Neosartorya fumigata).